We begin with the raw amino-acid sequence, 403 residues long: VITGMGALSPIGNDVKTTWENALKGVNGIDKITRIDTEPYSVHLAGELKNFNIEDHIDKKEARRMDRFTQYAIVAAREAVKDAQLDINENTADRIGVWIGSGIGGMETFEIAHKQLMDKGPRRVSPFFVPMLIPDMATGQVSIDLGAKGPNGATVTACATGTNSIGEAFKIVQRGDADAMITGGTEAPITHMAIAGFSASRALSTNDDIETACRPFQEGRDGFVMGEGAGILVIESLESAQARGANIYAEIVGYGTTGDAYHITAPAPEGEGGSRAMQAAMDDAGIEPKDVQYLNAHGTSTPVGDLNEVKAIKNTFGEAAKHLKVSSTKSMTGHLLGATGGIEAIFSALSIKDSKIAPTIHAVTPDPECDLDIVPNEAQDLDITYAMSNSLGFGGHNAVLVFK.

A Ketosynthase family 3 (KS3) domain is found at 1 to 403 (VITGMGALSP…GGHNAVLVFK (403 aa)). Residues Cys158, His297, and His334 each act as for beta-ketoacyl synthase activity in the active site.

Belongs to the thiolase-like superfamily. Beta-ketoacyl-ACP synthases family.

It carries out the reaction a fatty acyl-[ACP] + malonyl-[ACP] + H(+) = a 3-oxoacyl-[ACP] + holo-[ACP] + CO2. The enzyme catalyses (9Z)-hexadecenoyl-[ACP] + malonyl-[ACP] + H(+) = 3-oxo-(11Z)-octadecenoyl-[ACP] + holo-[ACP] + CO2. The protein operates within lipid metabolism; fatty acid biosynthesis. Involved in the type II fatty acid elongation cycle. Catalyzes the elongation of a wide range of acyl-ACP by the addition of two carbons from malonyl-ACP to an acyl acceptor. Can efficiently catalyze the conversion of palmitoleoyl-ACP (cis-hexadec-9-enoyl-ACP) to cis-vaccenoyl-ACP (cis-octadec-11-enoyl-ACP), an essential step in the thermal regulation of fatty acid composition. In Staphylococcus aureus, this protein is 3-oxoacyl-[acyl-carrier-protein] synthase 2 (fabF).